Here is a 121-residue protein sequence, read N- to C-terminus: Small ribosomal subunit protein uS13 (121 aa).

Residues 93-121 (KGLPLRGQKTKTNARTRKGPKKTIANKKK) are disordered.

It belongs to the universal ribosomal protein uS13 family. As to quaternary structure, part of the 30S ribosomal subunit. Forms a loose heterodimer with protein S19. Forms two bridges to the 50S subunit in the 70S ribosome.

Its function is as follows. Located at the top of the head of the 30S subunit, it contacts several helices of the 16S rRNA. In the 70S ribosome it contacts the 23S rRNA (bridge B1a) and protein L5 of the 50S subunit (bridge B1b), connecting the 2 subunits; these bridges are implicated in subunit movement. Contacts the tRNAs in the A and P-sites. This is Small ribosomal subunit protein uS13 from Clostridium perfringens (strain ATCC 13124 / DSM 756 / JCM 1290 / NCIMB 6125 / NCTC 8237 / Type A).